The sequence spans 653 residues: Aspartate--tRNA ligase, mitochondrial (653 aa).

The N-terminal 46 residues, 1 to 46, are a transit peptide targeting the mitochondrion; the sequence is MYLGFWLSRLCRGLSRPIGKTMRPIWGSLSRNLALSSQRIPEFSSF. Residue Thr218 is modified to Phosphothreonine. Residue Ser241 is modified to Phosphoserine. The aspartate stretch occupies residues 243–246; sequence QQFK. Position 265 (Arg265) interacts with L-aspartate. Residues 265–267 and Glu534 each bind ATP; that span reads RDE. Arg541 lines the L-aspartate pocket. 583–586 is a binding site for ATP; the sequence is GLDR.

Belongs to the class-II aminoacyl-tRNA synthetase family. Type 1 subfamily. Homodimer.

It is found in the mitochondrion matrix. The protein resides in the mitochondrion membrane. The enzyme catalyses tRNA(Asp) + L-aspartate + ATP = L-aspartyl-tRNA(Asp) + AMP + diphosphate. Functionally, catalyzes the attachment of aspartate to tRNA(Asp) in a two-step reaction: aspartate is first activated by ATP to form Asp-AMP and then transferred to the acceptor end of tRNA(Asp). The chain is Aspartate--tRNA ligase, mitochondrial (Dars2) from Mus musculus (Mouse).